The following is a 376-amino-acid chain: DNA polymerase IV (376 aa).

A UmuC domain is found at 6–187 (IIHIDMDAFF…LSIGKFYGVG (182 aa)). Residues aspartate 10 and aspartate 105 each coordinate Mg(2+). Residue glutamate 106 is part of the active site.

This sequence belongs to the DNA polymerase type-Y family. As to quaternary structure, monomer. Mg(2+) serves as cofactor.

It localises to the cytoplasm. The catalysed reaction is DNA(n) + a 2'-deoxyribonucleoside 5'-triphosphate = DNA(n+1) + diphosphate. Functionally, poorly processive, error-prone DNA polymerase involved in untargeted mutagenesis. Copies undamaged DNA at stalled replication forks, which arise in vivo from mismatched or misaligned primer ends. These misaligned primers can be extended by PolIV. Exhibits no 3'-5' exonuclease (proofreading) activity. May be involved in translesional synthesis, in conjunction with the beta clamp from PolIII. In Desulfotalea psychrophila (strain LSv54 / DSM 12343), this protein is DNA polymerase IV.